Consider the following 90-residue polypeptide: Essential MCU regulator, mitochondrial (90 aa).

The chain crosses the membrane as a helical span at residues 49-68 (GVLKLIFVSASSLYIGGLIA).

This sequence belongs to the SMDT1/EMRE family.

The protein localises to the mitochondrion inner membrane. Essential regulatory subunit of the mitochondrial calcium uniporter (mcu-1) channel, a protein that mediates calcium uptake into mitochondria. The polypeptide is Essential MCU regulator, mitochondrial (Caenorhabditis elegans).